The chain runs to 335 residues: Mycobacterial beta-ketoacyl-[acyl-carrier-protein] synthase III (335 aa).

Active-site residues include cysteine 122 and histidine 258. The segment at 259–263 (QANSR) is ACP-binding. Asparagine 289 is a catalytic residue.

It belongs to the thiolase-like superfamily. FabH family. As to quaternary structure, homodimer.

The protein resides in the cytoplasm. It catalyses the reaction malonyl-[ACP] + dodecanoyl-CoA + H(+) = 3-oxotetradecanoyl-[ACP] + CO2 + CoA. The protein operates within lipid metabolism; fatty acid biosynthesis. It functions in the pathway lipid metabolism; mycolic acid biosynthesis. Its function is as follows. Catalyzes the condensation reaction of fatty acid synthesis by the addition to an acyl acceptor of two carbons from malonyl-ACP. Catalyzes the first condensation reaction which initiates fatty acid synthesis and may therefore play a role in governing the total rate of fatty acid production. Possesses both acetoacetyl-ACP synthase and acetyl transacylase activities. Its substrate specificity determines the biosynthesis of branched-chain and/or straight-chain of fatty acids. The protein is Mycobacterial beta-ketoacyl-[acyl-carrier-protein] synthase III of Mycobacterium bovis (strain ATCC BAA-935 / AF2122/97).